A 330-amino-acid chain; its full sequence is D-xylose-binding periplasmic protein (330 aa).

A signal peptide spans methionine 1 to alanine 23.

It belongs to the bacterial solute-binding protein 2 family.

Its subcellular location is the periplasm. Involved in the high-affinity D-xylose membrane transport system. Binds with high affinity to xylose. This chain is D-xylose-binding periplasmic protein (xylF), found in Escherichia coli (strain K12).